The primary structure comprises 549 residues: Glucose-6-phosphate isomerase (549 aa).

E355 (proton donor) is an active-site residue. Active-site residues include H386 and K514.

It belongs to the GPI family.

It localises to the cytoplasm. The catalysed reaction is alpha-D-glucose 6-phosphate = beta-D-fructose 6-phosphate. It participates in carbohydrate biosynthesis; gluconeogenesis. The protein operates within carbohydrate degradation; glycolysis; D-glyceraldehyde 3-phosphate and glycerone phosphate from D-glucose: step 2/4. Catalyzes the reversible isomerization of glucose-6-phosphate to fructose-6-phosphate. In Salmonella agona (strain SL483), this protein is Glucose-6-phosphate isomerase.